The chain runs to 679 residues: Stress-70 protein, mitochondrial (679 aa).

A mitochondrion-targeting transit peptide spans 1-46; that stretch reads MISATRAAAARLVGTAASRTPAAARHQDGWNGLSHEAFRFVSRRDY. Positions 1–432 are interaction with NFS1; the sequence is MISATRAAAA…IQGGVLAGDV (432 aa). ADP-binding residues include Thr63 and Asn64. A nucleotide-binding domain (NBD) region spans residues 63-431; sequence TNSCVAVMEG…AIQGGVLAGD (369 aa). The residue at position 76 (Lys76) is an N6-acetyllysine. At Thr87 the chain carries Phosphothreonine. Residues Lys135 and Lys138 each carry the N6-acetyllysine; alternate modification. Residues Lys135 and Lys138 each carry the N6-succinyllysine; alternate modification. Lys143 carries the N6-acetyllysine modification. Lys206 carries the post-translational modification N6-acetyllysine; alternate. Lys206 bears the N6-succinyllysine; alternate mark. Lys206 bears the N6-malonyllysine; alternate mark. 2 positions are modified to N6-acetyllysine: Lys234 and Lys288. Lys300 carries the post-translational modification N6-acetyllysine; alternate. The residue at position 300 (Lys300) is an N6-succinyllysine; alternate. Residues Glu313, Lys316, and Ser320 each coordinate ADP. Lys360 is subject to N6-acetyllysine; alternate. Lys360 is modified (N6-succinyllysine; alternate). The residue at position 368 (Lys368) is an N6-succinyllysine. ADP contacts are provided by Gly388 and Arg391. An N6-succinyllysine modification is found at Lys394. Ser408 is subject to Phosphoserine. The segment at 432 to 441 is interdomain linker; it reads VTDVLLLDVT. The interaction with FXN and ISCU stretch occupies residues 432-679; the sequence is VTDVLLLDVT…QKEDQKEEKQ (248 aa). The substrate-binding domain (SBD) stretch occupies residues 442 to 679; the sequence is PLSLGIETLG…QKEDQKEEKQ (238 aa). Arg513 carries the omega-N-methylarginine modification. 2 positions are modified to N6-acetyllysine; alternate: Lys567 and Lys600. N6-succinyllysine; alternate is present on residues Lys567 and Lys600. Lys610 bears the N6-succinyllysine mark. An N6-acetyllysine modification is found at Lys612. Lys646 carries the post-translational modification N6-acetyllysine; alternate. N6-succinyllysine; alternate is present on Lys646. Positions 656-679 are disordered; that stretch reads ASEREGSGSSGTGEQKEDQKEEKQ. A compositionally biased stretch (basic and acidic residues) spans 669–679; sequence EQKEDQKEEKQ.

The protein belongs to the heat shock protein 70 family. As to quaternary structure, interacts strongly with the intermediate form of FXN and weakly with its mature form. Interacts with HSCB. Associates with the mitochondrial contact site and cristae organizing system (MICOS) complex, composed of at least MICOS10/MIC10, CHCHD3/MIC19, CHCHD6/MIC25, APOOL/MIC27, IMMT/MIC60, APOO/MIC23/MIC26 and QIL1/MIC13. This complex was also known under the names MINOS or MitOS complex. The MICOS complex associates with mitochondrial outer membrane proteins SAMM50, MTX1, MTX2 and DNAJC11, mitochondrial inner membrane protein TMEM11 and with HSPA9. Interacts with DNLZ, the interaction is required to prevent self-aggregation. Interacts with TESPA1. Interacts with PDPN. Interacts with NFU1, NFS1 and ISCU. Interacts with TP53; the interaction promotes TP53 degradation. Interacts (via SBD domain) with UBXN2A; the interaction with UBXN2A inhibits HSPA9/MOT-2 interaction with and degradation of TP53, thereby promotes TP53 translocation to the nucleus. Interacts with ITPR1 AND VDAC1; this interaction couples ITPR1 to VDAC1. Component of the TIM23 mitochondrial inner membrane pre-sequence translocase complex.

The protein localises to the mitochondrion. Its subcellular location is the nucleus. It is found in the nucleolus. The protein resides in the cytoplasm. It localises to the mitochondrion matrix. It carries out the reaction ATP + H2O = ADP + phosphate + H(+). Its activity is regulated as follows. The chaperone activity is regulated by ATP-induced allosteric coupling of the nucleotide-binding (NBD) and substrate-binding (SBD) domains. ATP binding in the NBD leads to a conformational change in the NBD, which is transferred through the interdomain linker (IDL) to the substrate-binding domain (SBD). This elicits a reduced substrate affinity and a faster substrate exchange rate. Upon hydrolysis of ATP to ADP, the protein undergoes a conformational change that increases its affinity for substrate proteins. It cycles through repeated phases of ATP hydrolysis and nucleotide exchange, facilitating repeated cycles of substrate binding and release. Functions in collaboration with co-chaperones. Functions with the co-chaperone, DNLZ, to maintain solubility and regulate ATP hydrolysis. Nucleotide exchange factors, GRPEL1 and GRPEL2, accelerate nucleotide exchange. In terms of biological role, mitochondrial chaperone that plays a key role in mitochondrial protein import, folding, and assembly. Plays an essential role in the protein quality control system, the correct folding of proteins, the re-folding of misfolded proteins, and the targeting of proteins for subsequent degradation. These processes are achieved through cycles of ATP binding, ATP hydrolysis, and ADP release, mediated by co-chaperones. In mitochondria, it associates with the TIM (translocase of the inner membrane) protein complex to assist in the import and folding of mitochondrial proteins. Plays an important role in mitochondrial iron-sulfur cluster (ISC) biogenesis, interacts with and stabilizes ISC cluster assembly proteins FXN, NFU1, NFS1 and ISCU. Regulates erythropoiesis via stabilization of ISC assembly. Regulates mitochondrial calcium-dependent apoptosis by coupling two calcium channels, ITPR1 and VDAC1, at the mitochondria-associated endoplasmic reticulum (ER) membrane to facilitate calcium transport from the ER lumen to the mitochondria intermembrane space, providing calcium for the downstream calcium channel MCU, which releases it into the mitochondrial matrix. Although primarily located in the mitochondria, it is also found in other cellular compartments. In the cytosol, it associates with proteins involved in signaling, apoptosis, or senescence. It may play a role in cell cycle regulation via its interaction with and promotion of degradation of TP53. May play a role in the control of cell proliferation and cellular aging. Protects against reactive oxygen species (ROS). Extracellular HSPA9 plays a cytoprotective role by preventing cell lysis following immune attack by the membrane attack complex by disrupting formation of the complex. This is Stress-70 protein, mitochondrial from Cricetulus griseus (Chinese hamster).